Consider the following 739-residue polypeptide: Potassium transporter 26 (739 aa).

Over 1-81 (MEYHHRPHSP…RQVALLSFQS (81 aa)) the chain is Cytoplasmic. A helical transmembrane segment spans residues 82–102 (LGVVYGDLGTSPLYVFSSISL). At 103-112 (DDPGEADFVG) the chain is on the extracellular side. Residues 113 to 133 (ILSIILWTFTMICLVKYVFIV) form a helical membrane-spanning segment. The Cytoplasmic portion of the chain corresponds to 134 to 198 (LKADDHGEGG…KFLEQSTKWQ (65 aa)). Residues 199–219 (AVITYIVLAGTCMVLGDGALT) traverse the membrane as a helical segment. Topologically, residues 220–236 (PAISVLSAVQGIQSRSS) are extracellular. A helical membrane pass occupies residues 237–257 (SITQAHVVLLSVIILFILFFF). Over 258 to 268 (QKHGTSKVSFT) the chain is Cytoplasmic. A helical membrane pass occupies residues 269–289 (FSPIMILWFTFVAFIGLYNII). Residues 290 to 318 (KHYPPILKAVSPHYIIIYFIRNKRAAWET) are Extracellular-facing. Residues 319 to 339 (LGAIVLCITGAEAMFADLGHF) form a helical membrane-spanning segment. The Cytoplasmic portion of the chain corresponds to 340–347 (NKSSIQMA). Residues 348-368 (FSVIVYPSMILAYAGQAAFLV) traverse the membrane as a helical segment. The Extracellular portion of the chain corresponds to 369–385 (KNPSKLSTTFYSSTPEP). Residues 386-406 (LFWPMFIIATLAAIVASQALI) form a helical membrane-spanning segment. Over 407 to 437 (SASFSIIRQSIALGCFPRVTMKHTSGKHEGQ) the chain is Cytoplasmic. A helical transmembrane segment spans residues 438-458 (VYSPEINYFLMVACILITVGF). Topologically, residues 459–469 (KGGPEIGQAFG) are extracellular. The helical transmembrane segment at 470–490 (VAVIFVMLFTTNLMTVVMLII) threads the bilayer. Residues 491–494 (WESN) lie on the Cytoplasmic side of the membrane. The helical transmembrane segment at 495-515 (IALASLFFVFFFSIEGIYMTS) threads the bilayer. Residues 516-519 (LMNK) lie on the Extracellular side of the membrane. Residues 520–540 (ILQGGWVPFAITAFFLIITLS) form a helical membrane-spanning segment. Over 541–739 (WTYGRSKKGE…TLQVGMLYEI (199 aa)) the chain is Cytoplasmic.

The protein belongs to the HAK/KUP transporter (TC 2.A.72.3) family.

Its subcellular location is the membrane. In terms of biological role, high-affinity potassium transporter. In Oryza sativa subsp. japonica (Rice), this protein is Potassium transporter 26 (HAK26).